We begin with the raw amino-acid sequence, 380 residues long: Cystathionine beta-lyase (380 aa).

K196 is modified (N6-(pyridoxal phosphate)lysine).

It belongs to the trans-sulfuration enzymes family. Pyridoxal 5'-phosphate serves as cofactor.

The protein localises to the cytoplasm. It carries out the reaction L,L-cystathionine + H2O = L-homocysteine + pyruvate + NH4(+). The enzyme catalyses an S-substituted L-cysteine + H2O = a thiol + pyruvate + NH4(+). Its pathway is amino-acid biosynthesis; L-methionine biosynthesis via de novo pathway; L-homocysteine from L-cystathionine: step 1/1. The enzymatic degradation of amino acids in cheese is believed to generate aroma compounds and therefore to be essential for flavor development. Cystathionine beta-lyase (CBL) can convert cystathionine to homocysteine but is also able to catalyze an alpha, gamma elimination. With methionine as a substrate, it produces volatile sulfur compounds which are important for flavor formation in Gouda cheese. The chain is Cystathionine beta-lyase (metC) from Lactococcus lactis subsp. lactis (strain IL1403) (Streptococcus lactis).